An 816-amino-acid chain; its full sequence is Neuronal PAS domain-containing protein 2 (816 aa).

Positions 1 to 10 (MDEDEKDRAK) are enriched in basic and acidic residues. The interval 1-21 (MDEDEKDRAKRASRNKSEKKR) is disordered. The segment at 1–61 (MDEDEKDRAK…VIGFLQKHNE (61 aa)) is sufficient for heterodimer formation with BMAL1, E-box binding and for the effect of NADPH. Residues 9-59 (AKRASRNKSEKKRRDQFNVLIKELSSMLPGNTRKMDKTTVLEKVIGFLQKH) enclose the bHLH domain. A PAS 1 domain is found at 82–152 (NEEFTQLMLE…KILSSHMLVT (71 aa)). Heme b-binding residues include histidine 119 and histidine 171. One can recognise a PAS 2 domain in the interval 237-307 (FLKEMCVADE…RCHQHLMQFG (71 aa)). The region spanning 311–354 (SCCYRFLTKGQQWIWLQTHYYITYHQWNSKPEFIVCTHSVVSYA) is the PAC domain. 4 disordered regions span residues 364–431 (LALE…STPT), 610–639 (ISAQ…SQFS), 685–705 (QPMM…RTGR), and 742–816 (PSFP…LSES). Residues 400–413 (SGLPSSPSPSASSR) show a composition bias toward low complexity. Positions 420-431 (HTAMSEPTSTPT) are enriched in polar residues. Residues 623-639 (LLPASGRSLSSLPSQFS) are compositionally biased toward low complexity. The segment covering 745 to 759 (PASRPSPLQPAQAQQ) has biased composition (low complexity). Polar residues predominate over residues 780-789 (LLSTFSQQPG). Positions 806-816 (PSRRVSRLSES) are enriched in basic residues.

As to quaternary structure, component of the circadian clock oscillator which includes the CRY proteins, CLOCK or NPAS2, BMAL1 or BMAL2, CSNK1D and/or CSNK1E, TIMELESS and the PER proteins. Efficient DNA binding requires dimerization with another bHLH protein. Interacts with NCOA3, KAT2B and CREBBP. Forms a heterodimer with BMAL1 and this heterodimerization is required for E-box-dependent transactivation. Interacts with EP300. The cofactor is heme. As to expression, expressed in the retinal ganglion cells (at protein level). Expressed in the hypothalamic suprachiasmatic nuclei (SCN) of the brain. Also found in spinal cord, and to a lesser extent in colon, small intestine and uterus. Exhibits a diurnal variation in its expression in the brain.

The protein localises to the nucleus. With respect to regulation, carbon monoxide (CO) and the redox state of the cell can modulate the transcriptional activity of the NPAS2-BMAL1 heterodimer. NADH and NADPH enhance the DNA-binding activity of the heterodimer whereas CO binds the heme group in NPAS2 and inhibits the DNA-binding activity of the heterodimer. Its function is as follows. Transcriptional activator which forms a core component of the circadian clock. The circadian clock, an internal time-keeping system, regulates various physiological processes through the generation of approximately 24 hour circadian rhythms in gene expression, which are translated into rhythms in metabolism and behavior. It is derived from the Latin roots 'circa' (about) and 'diem' (day) and acts as an important regulator of a wide array of physiological functions including metabolism, sleep, body temperature, blood pressure, endocrine, immune, cardiovascular, and renal function. Consists of two major components: the central clock, residing in the suprachiasmatic nucleus (SCN) of the brain, and the peripheral clocks that are present in nearly every tissue and organ system. Both the central and peripheral clocks can be reset by environmental cues, also known as Zeitgebers (German for 'timegivers'). The predominant Zeitgeber for the central clock is light, which is sensed by retina and signals directly to the SCN. The central clock entrains the peripheral clocks through neuronal and hormonal signals, body temperature and feeding-related cues, aligning all clocks with the external light/dark cycle. Circadian rhythms allow an organism to achieve temporal homeostasis with its environment at the molecular level by regulating gene expression to create a peak of protein expression once every 24 hours to control when a particular physiological process is most active with respect to the solar day. Transcription and translation of core clock components (CLOCK, NPAS2, BMAL1, BMAL2, PER1, PER2, PER3, CRY1 and CRY2) plays a critical role in rhythm generation, whereas delays imposed by post-translational modifications (PTMs) are important for determining the period (tau) of the rhythms (tau refers to the period of a rhythm and is the length, in time, of one complete cycle). A diurnal rhythm is synchronized with the day/night cycle, while the ultradian and infradian rhythms have a period shorter and longer than 24 hours, respectively. Disruptions in the circadian rhythms contribute to the pathology of cardiovascular diseases, cancer, metabolic syndromes and aging. A transcription/translation feedback loop (TTFL) forms the core of the molecular circadian clock mechanism. Transcription factors, CLOCK or NPAS2 and BMAL1 or BMAL2, form the positive limb of the feedback loop, act in the form of a heterodimer and activate the transcription of core clock genes and clock-controlled genes (involved in key metabolic processes), harboring E-box elements (5'-CACGTG-3') within their promoters. The core clock genes: PER1/2/3 and CRY1/2 which are transcriptional repressors form the negative limb of the feedback loop and interact with the CLOCK|NPAS2-BMAL1|BMAL2 heterodimer inhibiting its activity and thereby negatively regulating their own expression. This heterodimer also activates nuclear receptors NR1D1/2 and RORA/B/G, which form a second feedback loop and which activate and repress BMAL1 transcription, respectively. The NPAS2-BMAL1 heterodimer positively regulates the expression of MAOA, F7 and LDHA and modulates the circadian rhythm of daytime contrast sensitivity by regulating the rhythmic expression of adenylate cyclase type 1 (ADCY1) in the retina. NPAS2 plays an important role in sleep homeostasis and in maintaining circadian behaviors in normal light/dark and feeding conditions and in the effective synchronization of feeding behavior with scheduled food availability. Regulates the gene transcription of key metabolic pathways in the liver and is involved in DNA damage response by regulating several cell cycle and DNA repair genes. Controls the circadian rhythm of NR0B2 expression by binding rhythmically to its promoter. Mediates the diurnal variation in the expression of GABARA1 receptor in the brain and contributes to the regulation of anxiety-like behaviors and GABAergic neurotransmission in the ventral striatum. The protein is Neuronal PAS domain-containing protein 2 (Npas2) of Mus musculus (Mouse).